The following is a 119-amino-acid chain: Small ribosomal subunit protein uS13 (119 aa).

Residues 92–119 form a disordered region; sequence RRGLPVRGQQTQTNARTRKGPRRGPASR.

It belongs to the universal ribosomal protein uS13 family. In terms of assembly, part of the 30S ribosomal subunit. Forms a loose heterodimer with protein S19. Forms two bridges to the 50S subunit in the 70S ribosome.

Located at the top of the head of the 30S subunit, it contacts several helices of the 16S rRNA. In the 70S ribosome it contacts the 23S rRNA (bridge B1a) and protein L5 of the 50S subunit (bridge B1b), connecting the 2 subunits; these bridges are implicated in subunit movement. Contacts the tRNAs in the A and P-sites. The chain is Small ribosomal subunit protein uS13 from Halorhodospira halophila (strain DSM 244 / SL1) (Ectothiorhodospira halophila (strain DSM 244 / SL1)).